The chain runs to 357 residues: tRNA/tmRNA (uracil-C(5))-methyltransferase (357 aa).

Residues Gln185, Tyr212, Asn217, Glu233, and Asp291 each coordinate S-adenosyl-L-methionine. Cys316 acts as the Nucleophile in catalysis. Residue Glu350 is the Proton acceptor of the active site.

It belongs to the class I-like SAM-binding methyltransferase superfamily. RNA M5U methyltransferase family. TrmA subfamily.

The catalysed reaction is uridine(54) in tRNA + S-adenosyl-L-methionine = 5-methyluridine(54) in tRNA + S-adenosyl-L-homocysteine + H(+). The enzyme catalyses uridine(341) in tmRNA + S-adenosyl-L-methionine = 5-methyluridine(341) in tmRNA + S-adenosyl-L-homocysteine + H(+). In terms of biological role, dual-specificity methyltransferase that catalyzes the formation of 5-methyluridine at position 54 (m5U54) in all tRNAs, and that of position 341 (m5U341) in tmRNA (transfer-mRNA). This is tRNA/tmRNA (uracil-C(5))-methyltransferase from Campylobacter hominis (strain ATCC BAA-381 / DSM 21671 / CCUG 45161 / LMG 19568 / NCTC 13146 / CH001A).